A 288-amino-acid chain; its full sequence is Stage IV sporulation protein FB (288 aa).

Over 1-10 (MNKWLDLILK) the chain is Mother cell cytoplasmic. A helical transmembrane segment spans residues 11–30 (IHVHPFLWIIAALGLLTGHM). A topological domain (forespore intermembrane space) is located at residue Lys-31. Residues 32–56 (ALLCLLLIVLIHELGHAALAVFFSW) traverse the membrane as a helical segment. Zn(2+) is bound at residue His-43. Glu-44 is a catalytic residue. His-47 is a binding site for Zn(2+). Residues 57-83 (RIKRVFLLPFGGTVEVEEHGNRPLKEE) lie on the Mother cell cytoplasmic side of the membrane. A helical membrane pass occupies residues 84 to 105 (FAVIIAGPLQHIWLQFAAWMLA). At 106 to 126 (EVSVIHQHTFELFTFYNLSIL) the chain is on the forespore intermembrane space side. The chain crosses the membrane as a helical span at residues 127–146 (FVNLLPIWPLDGGKLLFLLF). Position 137 (Asp-137) interacts with Zn(2+). The Mother cell cytoplasmic segment spans residues 147–161 (SKQLPFQKAHRLNLK). Residues 162–178 (TSLCFCLLLGCWVLFVI) traverse the membrane as a helical segment. A topological domain (forespore intermembrane space) is located at residue Pro-179. Residues 180-199 (LQISAWVLFVFLAVSLFEEY) form a helical membrane-spanning segment. The Mother cell cytoplasmic portion of the chain corresponds to 200–288 (RQRHYIHVRF…SSMEELLLPY (89 aa)).

It belongs to the peptidase M50B family. As to quaternary structure, forms a complex with SpoIVFA and BofA localized in the mother-cell membrane surrounding the forespore. The cofactor is Zn(2+).

The protein localises to the forespore outer membrane. Functionally, implicated in the coupling of mother cell to forespore gene expression. Required for spore formation. Processes the pro-sigma K factor. The sequence is that of Stage IV sporulation protein FB (spoIVFB) from Bacillus subtilis (strain 168).